Here is a 621-residue protein sequence, read N- to C-terminus: uncharacterized protein (621 aa).

Residues Ser269, Ser271, Ser274, Ser290, and Ser292 each carry the phosphoserine modification. 6 LRR repeats span residues 333-354, 357-379, 380-401, 404-425, 426-447, and 451-472; these read QLLYLRCSSCKLKSIPKNVFLS, SLVSLDLSGNELTEIPYALGELP, QLCSLNLASNKITGCRTFYHIS, HLQILVLSRNHLTSLSGLENVP, SLEKLDIRDNSITDVVEFRRLV, and NFEEAYLSLNPFTKTYSSYRIT. A disordered region spans residues 552 to 581; the sequence is SKNASGGDTSSNVSLLNGSASEEIPQNTES.

The protein localises to the cytoplasm. The protein resides in the nucleus. Its subcellular location is the vacuole membrane. This is an uncharacterized protein from Schizosaccharomyces pombe (strain 972 / ATCC 24843) (Fission yeast).